The primary structure comprises 272 residues: MIGSEIRMAKLFDKGRALVVALDHGLVMGPLKGIENPVEVVAKIAKNGPDALQMTPSMVKLVKENFFSRGSPMLITRLDTANVWRQKYKVYNEGYYASIYTVKDAISAGADAVVTYLVVGYGNDTVEGYNLSVLSSLRKEANDYGIPFIVEPLYVTKDNPDSVKEVDLVKYVTRLASEIGADILKVDYTGNKESFRQVINVAFSPILIRGGPKTNTTEEFLRMLRDALEAGAKGVTVGRNLWQAEEPDKLAKAISKVIHENADIGEALKILK.

Lysine 185 acts as the Schiff-base intermediate with substrate in catalysis.

This sequence belongs to the DeoC/FbaB aldolase family.

This is an uncharacterized protein from Saccharolobus solfataricus (strain ATCC 35092 / DSM 1617 / JCM 11322 / P2) (Sulfolobus solfataricus).